The sequence spans 849 residues: Serine/threonine-protein phosphatase 4 regulatory subunit 3B (849 aa).

In terms of domain architecture, WH1 spans 1 to 100 (MSDTRRRVKV…DEIWEKICQV (100 aa)). 2 positions are modified to phosphoserine: serine 117 and serine 695. The span at 714–724 (EMWFNEDEEEE) shows a compositional bias: acidic residues. A disordered region spans residues 714–849 (EMWFNEDEEE…SPRKRPRLGS (136 aa)). Residues 733-764 (EKPKPEDDFPDNYEKFMETKKAKESEDKENLP) show a composition bias toward basic and acidic residues. Residues 776–818 (FSHSASAANGTNSKSVVAQIPPATSNGSSSKTTNLPTSVTATK) are compositionally biased toward polar residues. Residues 827 to 838 (YPDDEEEDEEEE) show a composition bias toward acidic residues. Serine 840 bears the Phosphoserine mark.

It belongs to the SMEK family. As to quaternary structure, serine/threonine-protein phosphatase 4 (PP4) occurs in different assemblies of the catalytic and one or more regulatory subunits. Component of the PP4 complex PPP4C-PPP4R2-PPP4R3B. In terms of tissue distribution, moderately expressed in tissues and specific brain regions examined.

Its subcellular location is the cytoplasm. It is found in the cytoskeleton. It localises to the microtubule organizing center. The protein resides in the centrosome. The protein localises to the nucleus. Regulatory subunit of serine/threonine-protein phosphatase 4 (PP4). May regulate the activity of PPP4C at centrosomal microtubule organizing centers. This Homo sapiens (Human) protein is Serine/threonine-protein phosphatase 4 regulatory subunit 3B.